A 157-amino-acid chain; its full sequence is 2-C-methyl-D-erythritol 2,4-cyclodiphosphate synthase (157 aa).

Residues Asp8 and His10 each coordinate a divalent metal cation. Residues 8–10 and 34–35 contribute to the 4-CDP-2-C-methyl-D-erythritol 2-phosphate site; these read DVH and HS. His42 is an a divalent metal cation binding site. Residues 56-58, 61-65, 100-106, 132-135, Phe139, and Arg142 each bind 4-CDP-2-C-methyl-D-erythritol 2-phosphate; these read DIG, FPDTD, AQAPKMA, and TTSE.

Belongs to the IspF family. In terms of assembly, homotrimer. It depends on a divalent metal cation as a cofactor.

The enzyme catalyses 4-CDP-2-C-methyl-D-erythritol 2-phosphate = 2-C-methyl-D-erythritol 2,4-cyclic diphosphate + CMP. It functions in the pathway isoprenoid biosynthesis; isopentenyl diphosphate biosynthesis via DXP pathway; isopentenyl diphosphate from 1-deoxy-D-xylulose 5-phosphate: step 4/6. Functionally, involved in the biosynthesis of isopentenyl diphosphate (IPP) and dimethylallyl diphosphate (DMAPP), two major building blocks of isoprenoid compounds. Catalyzes the conversion of 4-diphosphocytidyl-2-C-methyl-D-erythritol 2-phosphate (CDP-ME2P) to 2-C-methyl-D-erythritol 2,4-cyclodiphosphate (ME-CPP) with a corresponding release of cytidine 5-monophosphate (CMP). The polypeptide is 2-C-methyl-D-erythritol 2,4-cyclodiphosphate synthase (Photobacterium profundum (strain SS9)).